The sequence spans 1099 residues: Carbamoyl phosphate synthase large chain (1099 aa).

The carboxyphosphate synthetic domain stretch occupies residues Met1–Glu402. ATP contacts are provided by Arg129, Arg169, Gly175, Gly176, Glu208, Val210, Glu215, Gly241, Ile242, His243, Gln285, and Glu299. Positions Lys133 to Val328 constitute an ATP-grasp 1 domain. Gln285, Glu299, and Asn301 together coordinate Mg(2+). Gln285, Glu299, and Asn301 together coordinate Mn(2+). The segment at Leu403 to Ala541 is oligomerization domain. Positions Val542–Gly944 are carbamoyl phosphate synthetic domain. Residues Ala666 to Val857 enclose the ATP-grasp 2 domain. Arg702, Lys741, Leu743, Glu748, Gly773, Val774, His775, Ser776, Gln816, and Glu828 together coordinate ATP. Mg(2+) is bound by residues Gln816, Glu828, and Asn830. The Mn(2+) site is built by Gln816, Glu828, and Asn830. In terms of domain architecture, MGS-like spans Asn945 to Met1099. The tract at residues Asn945 to Met1099 is allosteric domain.

The protein belongs to the CarB family. In terms of assembly, composed of two chains; the small (or glutamine) chain promotes the hydrolysis of glutamine to ammonia, which is used by the large (or ammonia) chain to synthesize carbamoyl phosphate. Tetramer of heterodimers (alpha,beta)4. Mg(2+) is required as a cofactor. The cofactor is Mn(2+).

It carries out the reaction hydrogencarbonate + L-glutamine + 2 ATP + H2O = carbamoyl phosphate + L-glutamate + 2 ADP + phosphate + 2 H(+). The catalysed reaction is hydrogencarbonate + NH4(+) + 2 ATP = carbamoyl phosphate + 2 ADP + phosphate + 2 H(+). Its pathway is amino-acid biosynthesis; L-arginine biosynthesis; carbamoyl phosphate from bicarbonate: step 1/1. The protein operates within pyrimidine metabolism; UMP biosynthesis via de novo pathway; (S)-dihydroorotate from bicarbonate: step 1/3. Large subunit of the glutamine-dependent carbamoyl phosphate synthetase (CPSase). CPSase catalyzes the formation of carbamoyl phosphate from the ammonia moiety of glutamine, carbonate, and phosphate donated by ATP, constituting the first step of 2 biosynthetic pathways, one leading to arginine and/or urea and the other to pyrimidine nucleotides. The large subunit (synthetase) binds the substrates ammonia (free or transferred from glutamine from the small subunit), hydrogencarbonate and ATP and carries out an ATP-coupled ligase reaction, activating hydrogencarbonate by forming carboxy phosphate which reacts with ammonia to form carbamoyl phosphate. In Thermotoga petrophila (strain ATCC BAA-488 / DSM 13995 / JCM 10881 / RKU-1), this protein is Carbamoyl phosphate synthase large chain.